Here is a 352-residue protein sequence, read N- to C-terminus: B1 bradykinin receptor (352 aa).

The Extracellular segment spans residues 1 to 41 (MASWPPLELQSSNQSQLFPQNATACDNAPEAWDLLHRVLPT). N-linked (GlcNAc...) asparagine glycans are attached at residues Asn-13 and Asn-21. The chain crosses the membrane as a helical span at residues 42 to 62 (FIISICSFGLLGNLFVLLVFL). At 63–72 (LPRRRLNVAE) the chain is on the cytoplasmic side. Residues 73–93 (IYLANLAASDLVFVLGLPFWA) form a helical membrane-spanning segment. Residues 94–110 (ENIWNQFNWPFGALLCR) lie on the Extracellular side of the membrane. An intrachain disulfide couples Cys-109 to Cys-188. The helical transmembrane segment at 111–131 (GINGVIKANLFISIFLVVAIS) threads the bilayer. Over 132 to 153 (QDRYCLLVHPMASRRRQRRRQA) the chain is Cytoplasmic. Residues 154-174 (RVTCVLIWVVGGLLSIPTFLL) traverse the membrane as a helical segment. Residues 175 to 206 (RSIQAVPDLNITACILLLPHEAWHFARIVELN) are Extracellular-facing. The N-linked (GlcNAc...) asparagine glycan is linked to Asn-184. Residues 207–227 (ILAFLLPLAAIVFFNYHILAS) traverse the membrane as a helical segment. Residues 228–250 (LRGREEVSRTRCGGRKDSKTTAL) are Cytoplasmic-facing. The helical transmembrane segment at 251-271 (ILTLVVAFLVCWAPYHFFAFL) threads the bilayer. Over 272 to 294 (EFLFQVQAIRGCFWEDFIDLGLQ) the chain is Extracellular. Residues 295-315 (LANFLAFTNSSLNPVIYVFVG) form a helical membrane-spanning segment. Residues 316-352 (RLFRTKVWELYKQCTPKSLAPISSSHRKEIFQLFWRN) are Cytoplasmic-facing. Cys-329 carries S-palmitoyl cysteine lipidation.

It belongs to the G-protein coupled receptor 1 family. Bradykinin receptor subfamily. BDKRB1 sub-subfamily.

It localises to the cell membrane. In terms of biological role, this is a receptor for bradykinin. Could be a factor in chronic pain and inflammation. This chain is B1 bradykinin receptor (BDKRB1), found in Chlorocebus aethiops (Green monkey).